Here is a 1010-residue protein sequence, read N- to C-terminus: MDTSKISARYSKVDLLALRYEGKSRQRPQCSTRLELQTLGFWKINLNTAALTVSSAYSNQNKNRLSPEADNSSLICSNSSSISSRRAMRNRERANNYYQRFVPTDSLLISGEDKDKDALSHGQPYKLNIIDHRSISSSHLMPAFAKRRFVISKGSNSEESNEGINTCASKGKAASSPSRKGSELDTAETCLNFVQPDHDQCMSSSPTFSTSRQERRIGSGRLLPRSDNWDYKNEKTVEASIENEKETSPNGSGSTSSLNQHNQSQHRSRTFSGRLVERVPEVTDRRFQYDSKKSFDRQGINNRRISGKEPFSTQSRSKRGNSYLIHEEPEWFSAGPKSQLETIDLHGFEDLEKNEERSVTEDKNNQIQQLDKNLDAQASKDEASMRNSNDSLNFREVIPSDEKKHTDENVVTSIQNSTDLGHPNKNKPIQMQPSQNPESEFNFDAFLNMHPLDNSVLSNDETGKSDSKGTSRFSRWFRQKEAANNNEFPGFRESHAQEKRGIPSVKDLEAQMIKVDMRTDLINPIAGSLCQTVQMEKPIARDTEAFKKLLQQLGSQARQHHPCNDDCRTINLSNIANHVHLESKLHQKINDGHLQQPELSVNVPTMPTSSHVFLQKRLEIQHLIQRLHCGDVSHDFLEKELDNPSTPAATKDVIATVLNEYSHSKRNPVVTGDPNIFTQQSFLQPQSVHQHYSQELHSQNTANHTINQLISHGNSPTPLAFTPTSVLRKMTADKDTQSPSTYCQNPQYHVHQQNAKQVGTRENVLEPQLTATMAVQPRMILGGGNFAIGQNNQHLSPNMSQSRNQQVLKWTSGNMQMVHGKTFGRPILKGGLNSMPHSNSALPFTAHKIEMQPIHQPHLQQQQHRFKAVQSVESNLNTESVHQNITSPVGWHQLYMQHQQQHHHTRQQLSQRVIYGEMHRQSNPQMSPPVPGFSDSSDSGNVIKANSLTSPSYQRDERISSPTNQLAQWFSPELLAKASAGKLPLLNVNQALSLEEFERSIQHSSGVVHN.

The YXXXXLphi motif motif lies at 10-16 (YSKVDLL). Disordered stretches follow at residues 154 to 182 (GSNS…RKGS), 196 to 277 (PDHD…RLVE), 289 to 320 (YDSK…SKRG), 354 to 391 (NEER…SNDS), and 921 to 960 (QSNP…ERIS). Positions 201–211 (CMSSSPTFSTS) are enriched in polar residues. The span at 227–247 (DNWDYKNEKTVEASIENEKET) shows a compositional bias: basic and acidic residues. Residues 248–263 (SPNGSGSTSSLNQHNQ) show a composition bias toward polar residues. Basic and acidic residues-rich tracts occupy residues 354–364 (NEERSVTEDKN) and 372–384 (KNLD…DEAS). Residues 934 to 953 (SDSSDSGNVIKANSLTSPSY) are compositionally biased toward polar residues.

Belongs to the 4E-T/EIF4E-T family. As to quaternary structure, interacts (via YXXXXLphi motif) with eIF4E1. Interacts with DDX6/me31B. Expressed in all larval and adult organs and tissues, with highest levels in the ovary.

The protein resides in the cytoplasm. It is found in the P-body. Its subcellular location is the nucleus. Its function is as follows. eIF4E1-binding protein that regulates translation and stability of mRNAs in processing bodies (P-bodies). Probably plays a role in P-bodies to coordinate the storage of translationally inactive mRNAs in the cytoplasm and prevent their degradation. Acts as a binding platform for multiple RNA-binding proteins. Required for the formation of P-bodies. This chain is Eukaryotic translation initiation factor 4E transporter, found in Drosophila melanogaster (Fruit fly).